A 233-amino-acid chain; its full sequence is Glutathione S-transferase 2 (233 aa).

In terms of domain architecture, GST N-terminal spans 17-101 (QKMIIYDTPA…YIDALDGTPT (85 aa)). Residues tyrosine 29, histidine 58, valine 72, 85–86 (EC), and histidine 133 each bind glutathione. A GST C-terminal domain is found at 106 to 233 (TPLEKGVIHM…KLLEIRSKSS (128 aa)).

This sequence belongs to the GST superfamily. In terms of assembly, homodimer.

The enzyme catalyses RX + glutathione = an S-substituted glutathione + a halide anion + H(+). This Saccharomyces cerevisiae (strain ATCC 204508 / S288c) (Baker's yeast) protein is Glutathione S-transferase 2 (GTT2).